A 425-amino-acid chain; its full sequence is Multifunctional CCA protein (425 aa).

ATP-binding residues include glycine 8 and arginine 11. Residues glycine 8 and arginine 11 each contribute to the CTP site. Positions 21 and 23 each coordinate Mg(2+). Arginine 91, arginine 141, and arginine 144 together coordinate ATP. Positions 91, 141, and 144 each coordinate CTP. The 102-residue stretch at 230–331 (TGVHLMMVLD…VRLLERCDAI (102 aa)) folds into the HD domain.

The protein belongs to the tRNA nucleotidyltransferase/poly(A) polymerase family. Bacterial CCA-adding enzyme type 1 subfamily. In terms of assembly, monomer. Can also form homodimers and oligomers. Mg(2+) is required as a cofactor. Requires Ni(2+) as cofactor.

The catalysed reaction is a tRNA precursor + 2 CTP + ATP = a tRNA with a 3' CCA end + 3 diphosphate. It catalyses the reaction a tRNA with a 3' CCA end + 2 CTP + ATP = a tRNA with a 3' CCACCA end + 3 diphosphate. Functionally, catalyzes the addition and repair of the essential 3'-terminal CCA sequence in tRNAs without using a nucleic acid template. Adds these three nucleotides in the order of C, C, and A to the tRNA nucleotide-73, using CTP and ATP as substrates and producing inorganic pyrophosphate. tRNA 3'-terminal CCA addition is required both for tRNA processing and repair. Also involved in tRNA surveillance by mediating tandem CCA addition to generate a CCACCA at the 3' terminus of unstable tRNAs. While stable tRNAs receive only 3'-terminal CCA, unstable tRNAs are marked with CCACCA and rapidly degraded. This Acidovorax sp. (strain JS42) protein is Multifunctional CCA protein.